Consider the following 531-residue polypeptide: UDP-glucuronosyltransferase 1A7 (531 aa).

The first 25 residues, 1–25, serve as a signal peptide directing secretion; that stretch reads MAPADVPASLPLGLCLLLASGFGHA. N71, N293, and N431 each carry an N-linked (GlcNAc...) asparagine glycan. The helical transmembrane segment at 487–503 threads the bilayer; the sequence is LDVIGFLLAIVLTVVFI.

This sequence belongs to the UDP-glycosyltransferase family. Homodimer. Homooligomer. Interacts with UGT1A1, UGT1A3, UGT1A4, UGT1A6, UGT1A8, UGT1A9 and UGT1A10 to form heterodimers.

The protein resides in the endoplasmic reticulum membrane. The catalysed reaction is glucuronate acceptor + UDP-alpha-D-glucuronate = acceptor beta-D-glucuronoside + UDP + H(+). It catalyses the reaction 17alpha-estradiol + UDP-alpha-D-glucuronate = 17alpha-estradiol 3-O-(beta-D-glucuronate) + UDP + H(+). The enzyme catalyses prunetin + UDP-alpha-D-glucuronate = prunetin-5-O-beta-D-glucuronide + UDP. It carries out the reaction 5-epi-5-F2t-IsoP + UDP-alpha-D-glucuronate = 5-epi-5-F2t-IsoP-glucuronide + UDP + H(+). The catalysed reaction is (E)-ferulate + UDP-alpha-D-glucuronate = (E)-ferulic acid beta-D-glucuronate ester + UDP. It catalyses the reaction candesartan + UDP-alpha-D-glucuronate = candesartan O-beta-D-glucuronoside + UDP. The enzyme catalyses SN-38 + UDP-alpha-D-glucuronate = SN-38 O-beta-D-glucuronide + UDP + H(+). It carries out the reaction mycophenolate + UDP-alpha-D-glucuronate = mycophenolate 7-O-beta-D-glucuronide + UDP + H(+). Its function is as follows. UDP-glucuronosyltransferase (UGT) that catalyzes phase II biotransformation reactions in which lipophilic substrates are conjugated with glucuronic acid to increase the metabolite's water solubility, thereby facilitating excretion into either the urine or bile. Essential for the elimination and detoxification of drugs, xenobiotics and endogenous compounds. Catalyzes the glucuronidation of endogenous estrogen hormone epiestradiol. Involved in the glucuronidation of F2-isoprostane (5-epi-5-F2t-IsoP). Involved in the glucuronidation of the phytochemical ferulic acid at the carboxylic acid group. Also catalyzes the glucuronidation of the isoflavones genistein, daidzein, glycitein, formononetin, biochanin A and prunetin, which are phytoestrogens with anticancer and cardiovascular properties. Involved in the glucuronidation of the AGTR1 angiotensin receptor antagonist caderastan, a drug which can inhibit the effect of angiotensin II. Involved in the biotransformation of 7-ethyl-10-hydroxycamptothecin (SN-38), the pharmacologically active metabolite of the anticancer drug irinotecan. Also metabolizes mycophenolate, an immunosuppressive agent. This chain is UDP-glucuronosyltransferase 1A7, found in Rattus norvegicus (Rat).